A 228-amino-acid polypeptide reads, in one-letter code: F-box protein At5g67140 (228 aa).

An F-box domain is found at 4 to 51 (EAAIDRLPLDLLAYIFSLATSFTVLAQASGVCKKWRKAVNQSMARRET).

The protein is F-box protein At5g67140 of Arabidopsis thaliana (Mouse-ear cress).